Consider the following 441-residue polypeptide: tRNA(Ile)-lysidine synthase (441 aa).

27-32 is an ATP binding site; it reads SGGVDS.

It belongs to the tRNA(Ile)-lysidine synthase family.

The protein localises to the cytoplasm. It carries out the reaction cytidine(34) in tRNA(Ile2) + L-lysine + ATP = lysidine(34) in tRNA(Ile2) + AMP + diphosphate + H(+). Ligates lysine onto the cytidine present at position 34 of the AUA codon-specific tRNA(Ile) that contains the anticodon CAU, in an ATP-dependent manner. Cytidine is converted to lysidine, thus changing the amino acid specificity of the tRNA from methionine to isoleucine. The chain is tRNA(Ile)-lysidine synthase from Proteus mirabilis (strain HI4320).